Here is a 333-residue protein sequence, read N- to C-terminus: Foldase protein PrsA (333 aa).

A signal peptide spans 1-21 (MKKRTIATGLVTLLSIVTLAA). Residue cysteine 22 is the site of N-palmitoyl cysteine attachment. Cysteine 22 carries the S-diacylglycerol cysteine lipid modification. Residues 144–237 (KPEVTAQVIQ…PVYYIVKITK (94 aa)) enclose the PpiC domain. Residues 296–333 (AASGSGSSGSTTTTTAASSAATTAADDQTTAAETTAAE) are disordered.

Belongs to the PrsA family.

Its subcellular location is the cell membrane. It catalyses the reaction [protein]-peptidylproline (omega=180) = [protein]-peptidylproline (omega=0). Its function is as follows. Plays a major role in protein secretion by helping the post-translocational extracellular folding of several secreted proteins. The polypeptide is Foldase protein PrsA (Streptococcus mutans serotype c (strain ATCC 700610 / UA159)).